The primary structure comprises 474 residues: Ribulose bisphosphate carboxylase large chain (474 aa).

Lysine 13 carries the post-translational modification N6,N6,N6-trimethyllysine. The substrate site is built by asparagine 122 and threonine 172. Catalysis depends on lysine 174, which acts as the Proton acceptor. Lysine 176 provides a ligand contact to substrate. Mg(2+)-binding residues include lysine 200, aspartate 202, and glutamate 203. The residue at position 200 (lysine 200) is an N6-carboxylysine. Histidine 293 functions as the Proton acceptor in the catalytic mechanism. The substrate site is built by arginine 294, histidine 326, and serine 378.

Belongs to the RuBisCO large chain family. Type I subfamily. As to quaternary structure, heterohexadecamer of 8 large chains and 8 small chains; disulfide-linked. The disulfide link is formed within the large subunit homodimers. It depends on Mg(2+) as a cofactor. In terms of processing, the disulfide bond which can form in the large chain dimeric partners within the hexadecamer appears to be associated with oxidative stress and protein turnover.

The protein resides in the plastid. Its subcellular location is the chloroplast. The enzyme catalyses 2 (2R)-3-phosphoglycerate + 2 H(+) = D-ribulose 1,5-bisphosphate + CO2 + H2O. It carries out the reaction D-ribulose 1,5-bisphosphate + O2 = 2-phosphoglycolate + (2R)-3-phosphoglycerate + 2 H(+). RuBisCO catalyzes two reactions: the carboxylation of D-ribulose 1,5-bisphosphate, the primary event in carbon dioxide fixation, as well as the oxidative fragmentation of the pentose substrate in the photorespiration process. Both reactions occur simultaneously and in competition at the same active site. The sequence is that of Ribulose bisphosphate carboxylase large chain from Dendrophthora clavata (Columbian mistletoe).